The chain runs to 330 residues: Major ferric iron-binding protein (330 aa).

The signal sequence occupies residues Met1–Ala22. Fe cation is bound by residues His31, Glu79, Tyr217, and Tyr218.

This sequence belongs to the bacterial solute-binding protein 1 family.

Its subcellular location is the periplasm. Functionally, this protein may be a central component in the iron-acquisition system. This chain is Major ferric iron-binding protein (fbp), found in Neisseria gonorrhoeae.